Reading from the N-terminus, the 107-residue chain is Protein RnfH (107 aa).

The segment at 82–107 (ARRKRAEKAKEEGRANKVTGGRPIER) is disordered.

This sequence belongs to the UPF0125 (RnfH) family.

This chain is Protein RnfH, found in Pseudoalteromonas translucida (strain TAC 125).